A 697-amino-acid polypeptide reads, in one-letter code: Elongation factor G (697 aa).

The tr-type G domain maps to 8 to 282 (ENTRNIGIMA…AIVDYMPSPV (275 aa)). GTP is bound by residues 17–24 (AHIDAGKT), 81–85 (DTPGH), and 135–138 (NKMD).

Belongs to the TRAFAC class translation factor GTPase superfamily. Classic translation factor GTPase family. EF-G/EF-2 subfamily.

It is found in the cytoplasm. Its function is as follows. Catalyzes the GTP-dependent ribosomal translocation step during translation elongation. During this step, the ribosome changes from the pre-translocational (PRE) to the post-translocational (POST) state as the newly formed A-site-bound peptidyl-tRNA and P-site-bound deacylated tRNA move to the P and E sites, respectively. Catalyzes the coordinated movement of the two tRNA molecules, the mRNA and conformational changes in the ribosome. The protein is Elongation factor G of Acetivibrio thermocellus (strain ATCC 27405 / DSM 1237 / JCM 9322 / NBRC 103400 / NCIMB 10682 / NRRL B-4536 / VPI 7372) (Clostridium thermocellum).